The primary structure comprises 179 residues: Fimbrial subunit ElfA (179 aa).

The first 21 residues, M1–A21, serve as a signal peptide directing secretion.

This sequence belongs to the fimbrial protein family.

It is found in the fimbrium. In terms of biological role, part of the elfADCG-ycbUVF fimbrial operon, which promotes adhesion of bacteria to different abiotic surfaces. ElfA is the major fimbrial subunit produced by this operon. In Escherichia coli (strain K12), this protein is Fimbrial subunit ElfA (elfA).